A 477-amino-acid polypeptide reads, in one-letter code: Ribulose bisphosphate carboxylase large chain (477 aa).

A propeptide spanning residues 1–2 (MS) is cleaved from the precursor. At proline 3 the chain carries N-acetylproline. Lysine 14 is modified (N6,N6,N6-trimethyllysine). 2 residues coordinate substrate: asparagine 123 and threonine 173. Lysine 175 functions as the Proton acceptor in the catalytic mechanism. Lysine 177 provides a ligand contact to substrate. Lysine 201, aspartate 203, and glutamate 204 together coordinate Mg(2+). At lysine 201 the chain carries N6-carboxylysine. The Proton acceptor role is filled by histidine 294. Residues arginine 295, histidine 327, and serine 379 each contribute to the substrate site.

This sequence belongs to the RuBisCO large chain family. Type I subfamily. Heterohexadecamer of 8 large chains and 8 small chains; disulfide-linked. The disulfide link is formed within the large subunit homodimers. Mg(2+) serves as cofactor. Post-translationally, the disulfide bond which can form in the large chain dimeric partners within the hexadecamer appears to be associated with oxidative stress and protein turnover.

It is found in the plastid. The protein resides in the chloroplast. It carries out the reaction 2 (2R)-3-phosphoglycerate + 2 H(+) = D-ribulose 1,5-bisphosphate + CO2 + H2O. The enzyme catalyses D-ribulose 1,5-bisphosphate + O2 = 2-phosphoglycolate + (2R)-3-phosphoglycerate + 2 H(+). Its function is as follows. RuBisCO catalyzes two reactions: the carboxylation of D-ribulose 1,5-bisphosphate, the primary event in carbon dioxide fixation, as well as the oxidative fragmentation of the pentose substrate in the photorespiration process. Both reactions occur simultaneously and in competition at the same active site. This chain is Ribulose bisphosphate carboxylase large chain, found in Solanum bulbocastanum (Wild potato).